The chain runs to 308 residues: Mitochondrial import receptor subunit TOM40B (308 aa).

Residues 1–29 (MGNTLGLAPMGALPRRSPRREEPLPNPGS) are disordered. The tract at residues 281–308 (PLPVTLALGAFLNHWRNRFHCGFSITVG) is required for mitochondrial targeting.

Belongs to the Tom40 family. As to quaternary structure, forms part of the preprotein translocase of the outer mitochondrial membrane (TOM complex) containing TOMM22, TOMM40, TOMM40L and TOMM70. Interacts with mitochondrial targeting sequences.

Its subcellular location is the mitochondrion outer membrane. Functionally, potential channel-forming protein implicated in import of protein precursors into mitochondria. This is Mitochondrial import receptor subunit TOM40B from Bos taurus (Bovine).